An 879-amino-acid polypeptide reads, in one-letter code: Phosphoenolpyruvate carboxylase (879 aa).

Active-site residues include H138 and K545.

It belongs to the PEPCase type 1 family. The cofactor is Mg(2+).

The enzyme catalyses oxaloacetate + phosphate = phosphoenolpyruvate + hydrogencarbonate. Forms oxaloacetate, a four-carbon dicarboxylic acid source for the tricarboxylic acid cycle. The protein is Phosphoenolpyruvate carboxylase of Actinobacillus pleuropneumoniae serotype 5b (strain L20).